Reading from the N-terminus, the 122-residue chain is Large ribosomal subunit protein bL12 (122 aa).

The protein belongs to the bacterial ribosomal protein bL12 family. As to quaternary structure, homodimer. Part of the ribosomal stalk of the 50S ribosomal subunit. Forms a multimeric L10(L12)X complex, where L10 forms an elongated spine to which 2 to 4 L12 dimers bind in a sequential fashion. Binds GTP-bound translation factors.

In terms of biological role, forms part of the ribosomal stalk which helps the ribosome interact with GTP-bound translation factors. Is thus essential for accurate translation. This chain is Large ribosomal subunit protein bL12, found in Dichelobacter nodosus (strain VCS1703A).